The sequence spans 433 residues: 3-phosphoshikimate 1-carboxyvinyltransferase (433 aa).

3-phosphoshikimate-binding residues include lysine 20, serine 21, and arginine 25. Residue lysine 20 coordinates phosphoenolpyruvate. Glycine 92 and arginine 121 together coordinate phosphoenolpyruvate. 3-phosphoshikimate is bound by residues serine 167, serine 168, glutamine 169, serine 195, aspartate 315, and lysine 342. Residue glutamine 169 participates in phosphoenolpyruvate binding. Aspartate 315 (proton acceptor) is an active-site residue. Arginine 346 and arginine 388 together coordinate phosphoenolpyruvate.

The protein belongs to the EPSP synthase family. Monomer.

It is found in the cytoplasm. The catalysed reaction is 3-phosphoshikimate + phosphoenolpyruvate = 5-O-(1-carboxyvinyl)-3-phosphoshikimate + phosphate. The protein operates within metabolic intermediate biosynthesis; chorismate biosynthesis. Its function is as follows. Catalyzes the transfer of the enolpyruvyl moiety of phosphoenolpyruvate (PEP) to the 5-hydroxyl of shikimate-3-phosphate (S3P) to produce enolpyruvyl shikimate-3-phosphate and inorganic phosphate. The sequence is that of 3-phosphoshikimate 1-carboxyvinyltransferase from Methanococcus aeolicus (strain ATCC BAA-1280 / DSM 17508 / OCM 812 / Nankai-3).